Reading from the N-terminus, the 65-residue chain is Large ribosomal subunit protein uL29 (65 aa).

It belongs to the universal ribosomal protein uL29 family.

The chain is Large ribosomal subunit protein uL29 from Acidithiobacillus ferrooxidans (strain ATCC 23270 / DSM 14882 / CIP 104768 / NCIMB 8455) (Ferrobacillus ferrooxidans (strain ATCC 23270)).